The sequence spans 252 residues: Small ribosomal subunit protein uS2A (252 aa).

Ser-2 is subject to N-acetylserine. Positions 209-252 are disordered; sequence EVEQQAAEETTSTGADAEESKEEVAEGQNEASEWAEENTEAVSW. Positions 241-252 are enriched in acidic residues; sequence EWAEENTEAVSW.

The protein belongs to the universal ribosomal protein uS2 family. Component of the small ribosomal subunit. Mature ribosomes consist of a small (40S) and a large (60S) subunit. The 40S subunit contains about 33 different proteins and 1 molecule of RNA (18S). The 60S subunit contains about 49 different proteins and 3 molecules of RNA (25S, 5.8S and 5S). Interacts with RPS21.

It localises to the cytoplasm. Required for the assembly and/or stability of the 40S ribosomal subunit. Required for the processing of the 20S rRNA-precursor to mature 18S rRNA in a late step of the maturation of 40S ribosomal subunits. This chain is Small ribosomal subunit protein uS2A, found in Vanderwaltozyma polyspora (strain ATCC 22028 / DSM 70294 / BCRC 21397 / CBS 2163 / NBRC 10782 / NRRL Y-8283 / UCD 57-17) (Kluyveromyces polysporus).